The following is a 117-amino-acid chain: UPF0295 protein Bsph_0336 (117 aa).

A run of 2 helical transmembrane segments spans residues 13 to 33 (SFAL…IFFK) and 37 to 57 (ILVL…TVVY).

Belongs to the UPF0295 family.

It localises to the cell membrane. This is UPF0295 protein Bsph_0336 from Lysinibacillus sphaericus (strain C3-41).